Consider the following 379-residue polypeptide: Chaperone protein DnaJ (379 aa).

A J domain is found at 5–70 (DYYEVLGVEK…QKRAAYDQYG (66 aa)). The segment at 133 to 211 (GKSVEIRVPT…CHGQGRVEKT (79 aa)) adopts a CR-type zinc-finger fold. Zn(2+) is bound by residues cysteine 146, cysteine 149, cysteine 163, cysteine 166, cysteine 185, cysteine 188, cysteine 199, and cysteine 202. CXXCXGXG motif repeat units lie at residues 146 to 153 (CDTCDGSG), 163 to 170 (CTTCHGQG), 185 to 192 (CPTCGGKG), and 199 to 206 (CDVCHGQG).

Belongs to the DnaJ family. As to quaternary structure, homodimer. It depends on Zn(2+) as a cofactor.

It localises to the cytoplasm. Its function is as follows. Participates actively in the response to hyperosmotic and heat shock by preventing the aggregation of stress-denatured proteins and by disaggregating proteins, also in an autonomous, DnaK-independent fashion. Unfolded proteins bind initially to DnaJ; upon interaction with the DnaJ-bound protein, DnaK hydrolyzes its bound ATP, resulting in the formation of a stable complex. GrpE releases ADP from DnaK; ATP binding to DnaK triggers the release of the substrate protein, thus completing the reaction cycle. Several rounds of ATP-dependent interactions between DnaJ, DnaK and GrpE are required for fully efficient folding. Also involved, together with DnaK and GrpE, in the DNA replication of plasmids through activation of initiation proteins. This Pseudoalteromonas atlantica (strain T6c / ATCC BAA-1087) protein is Chaperone protein DnaJ.